The following is a 580-amino-acid chain: Keratin, type II cytoskeletal 5 (580 aa).

The interval 1-161 (MSRQSSVSFR…DPTIQRVRTE (161 aa)) is head. Phosphoserine occurs at positions 5, 8, 16, and 21. At Thr-24 the chain carries Phosphothreonine; by CDK1. Residues Ser-26, Ser-36, Ser-47, Ser-61, Ser-68, Ser-72, Ser-75, and Ser-79 each carry the phosphoserine modification. The residue at position 145 (Thr-145) is a Phosphothreonine; by CDK1. Position 160 is a phosphothreonine; by AURKB (Thr-160). Residues 162-197 (EREQIKTLNNKFASFIDKVRFLEQQNKVLDTKWALL) form a coil 1A region. The region spanning 162–475 (EREQIKTLNN…KLLEGEECRL (314 aa)) is the IF rod domain. Positions 198-216 (QEQGTKTIKQNLDPLFEQY) are linker 1. The tract at residues 217 to 309 (INNLRRQLDG…FFDAELSQMQ (93 aa)) is coil 1B. The tract at residues 310–332 (THVSDTSVVLSMDNNRSLDLDSI) is linker 12. The tract at residues 333 to 471 (IAEVKAQYED…ATYRKLLEGE (139 aa)) is coil 2. Residues 472–580 (ECRLSGEGVG…TSSSRRSFKS (109 aa)) are tail. Arg-526 is subject to Omega-N-methylarginine. Residues 555-580 (FGSGGGSGSSVKFVSTTSSSRRSFKS) are disordered. Positions 563–580 (SSVKFVSTTSSSRRSFKS) are enriched in low complexity.

Belongs to the intermediate filament family. Heterodimer of a type I and a type II keratin. Heterodimer with type I keratin KRT25 leading to the formation of keratin intermediate filament (KIF) network. Forms a heterodimer (via 2B domains) with KRT14 (via 2B domains). Interacts with PLEC isoform 1C, when in a heterodimer with KRT14. Interacts with TCHP. Interacts with EPPK1. Interacts with AMELX. Interacts with PKP1 (via N-terminus) and PKP2. In terms of processing, phosphorylated by CDK1, AURKB and Rho-kinase, phosphorylation is regulated by the cell cycle. Thr-24 phosphorylation, mediated by CDK1, peaks during prometaphase or metaphase cells with phosphorylated filamentous structures evident throughout the cytoplasm during early mitosis. CDK1 phosphorylates Thr-24 in mitotic cells at the site of injury. Post-translationally, O-glycosylated. As to expression, expressed in the corneal epithelium (at protein level). Expressed in the epidermis of the ear (at protein level). Expressed in the basal and spinous layers of the skin at birth (at protein level).

The protein resides in the cytoplasm. Functionally, required for the formation of keratin intermediate filaments in the basal epidermis and maintenance of the skin barrier in response to mechanical stress. Regulates the recruitment of Langerhans cells to the epidermis, potentially by modulation of the abundance of macrophage chemotactic cytokines, macrophage inflammatory cytokines and CTNND1 localization in keratinocytes. This Mus musculus (Mouse) protein is Keratin, type II cytoskeletal 5.